We begin with the raw amino-acid sequence, 670 residues long: DNA ligase (670 aa).

NAD(+)-binding positions include 33 to 37, 82 to 83, and glutamate 114; these read DAEYD and SL. The active-site N6-AMP-lysine intermediate is the lysine 116. Residues arginine 137, glutamate 174, lysine 291, and lysine 315 each contribute to the NAD(+) site. Positions 409, 412, 427, and 433 each coordinate Zn(2+). The region spanning 593 to 670 is the BRCT domain; the sequence is GVELPLEGKT…TEQDLLNLMK (78 aa).

Belongs to the NAD-dependent DNA ligase family. LigA subfamily. Requires Mg(2+) as cofactor. It depends on Mn(2+) as a cofactor.

The enzyme catalyses NAD(+) + (deoxyribonucleotide)n-3'-hydroxyl + 5'-phospho-(deoxyribonucleotide)m = (deoxyribonucleotide)n+m + AMP + beta-nicotinamide D-nucleotide.. DNA ligase that catalyzes the formation of phosphodiester linkages between 5'-phosphoryl and 3'-hydroxyl groups in double-stranded DNA using NAD as a coenzyme and as the energy source for the reaction. It is essential for DNA replication and repair of damaged DNA. The protein is DNA ligase of Vibrio campbellii (strain ATCC BAA-1116).